Consider the following 272-residue polypeptide: ATP synthase subunit delta (272 aa).

It belongs to the ATPase delta chain family. In terms of assembly, F-type ATPases have 2 components, F(1) - the catalytic core - and F(0) - the membrane proton channel. F(1) has five subunits: alpha(3), beta(3), gamma(1), delta(1), epsilon(1). F(0) has three main subunits: a(1), b(2) and c(10-14). The alpha and beta chains form an alternating ring which encloses part of the gamma chain. F(1) is attached to F(0) by a central stalk formed by the gamma and epsilon chains, while a peripheral stalk is formed by the delta and b chains.

Its subcellular location is the cell membrane. Functionally, f(1)F(0) ATP synthase produces ATP from ADP in the presence of a proton or sodium gradient. F-type ATPases consist of two structural domains, F(1) containing the extramembraneous catalytic core and F(0) containing the membrane proton channel, linked together by a central stalk and a peripheral stalk. During catalysis, ATP synthesis in the catalytic domain of F(1) is coupled via a rotary mechanism of the central stalk subunits to proton translocation. This protein is part of the stalk that links CF(0) to CF(1). It either transmits conformational changes from CF(0) to CF(1) or is implicated in proton conduction. The sequence is that of ATP synthase subunit delta from Corynebacterium jeikeium (strain K411).